Here is a 196-residue protein sequence, read N- to C-terminus: Large ribosomal subunit protein eL15 (196 aa).

Basic residues-rich tracts occupy residues 160-172 and 186-196; these read ATRG…RKGR and PSIRAHKSRGK. Residues 160–196 are disordered; it reads ATRGKTSAGRKGRGMSTRGKGTEKTRPSIRAHKSRGK.

This sequence belongs to the eukaryotic ribosomal protein eL15 family.

This chain is Large ribosomal subunit protein eL15 (rpl15e), found in Methanosarcina mazei (strain ATCC BAA-159 / DSM 3647 / Goe1 / Go1 / JCM 11833 / OCM 88) (Methanosarcina frisia).